Consider the following 434-residue polypeptide: Galactofuranosyl glycosyltransferase (434 aa).

Topologically, residues 1–18 (MAPPRWHHDRRRMAIFVR) are cytoplasmic. A helical; Signal-anchor for type II membrane protein transmembrane segment spans residues 19–38 (VGLYTLLFLMGYVVPLIIFY). N-linked (GlcNAc...) asparagine glycans are attached at residues asparagine 39, asparagine 100, asparagine 162, and asparagine 388. The Lumenal segment spans residues 39–434 (NRSRADTFED…KLLDFPVDPS (396 aa)).

The protein belongs to the glycosyltransferase 2 family.

It is found in the endoplasmic reticulum membrane. It functions in the pathway glycolipid biosynthesis; glycosylphosphatidylinositol-anchor biosynthesis. Functionally, glycosyltransferase that may be responsible for the addition of galactofuranosyl residues to the nascent lipophosphoglycan (LPG) chain. It could alternatively be involved in the synthesis of the galactofuranosyl donor. In Leishmania donovani, this protein is Galactofuranosyl glycosyltransferase (LPG1).